Consider the following 367-residue polypeptide: Probable L-aspartate decarboxylase (367 aa).

At lysine 216 the chain carries N6-(pyridoxal phosphate)lysine.

The protein belongs to the group II decarboxylase family. MfnA subfamily. Pyridoxal 5'-phosphate serves as cofactor.

It carries out the reaction L-aspartate + H(+) = beta-alanine + CO2. The protein operates within cofactor biosynthesis; coenzyme A biosynthesis. In terms of biological role, catalyzes the decarboxylation of L-aspartate to produce beta-alanine. This is Probable L-aspartate decarboxylase from Archaeoglobus fulgidus (strain ATCC 49558 / DSM 4304 / JCM 9628 / NBRC 100126 / VC-16).